Reading from the N-terminus, the 233-residue chain is Cilia- and flagella-associated protein 299 (233 aa).

As to expression, abundantly expressed in testis, specifically in spermatogonia and primary spermatocytes but not in secondary spermatocytes and spermatids.

The protein localises to the cytoplasm. Its subcellular location is the nucleus. Functionally, may be involved in spermatogenesis. This is Cilia- and flagella-associated protein 299 from Mus musculus (Mouse).